The chain runs to 186 residues: Elongation factor P (186 aa).

It belongs to the elongation factor P family.

It localises to the cytoplasm. It functions in the pathway protein biosynthesis; polypeptide chain elongation. Involved in peptide bond synthesis. Stimulates efficient translation and peptide-bond synthesis on native or reconstituted 70S ribosomes in vitro. Probably functions indirectly by altering the affinity of the ribosome for aminoacyl-tRNA, thus increasing their reactivity as acceptors for peptidyl transferase. The chain is Elongation factor P from Pelagibacter ubique (strain HTCC1062).